The chain runs to 79 residues: Small ribosomal subunit protein bS18 (79 aa).

It belongs to the bacterial ribosomal protein bS18 family. Part of the 30S ribosomal subunit. Forms a tight heterodimer with protein bS6.

Its function is as follows. Binds as a heterodimer with protein bS6 to the central domain of the 16S rRNA, where it helps stabilize the platform of the 30S subunit. This chain is Small ribosomal subunit protein bS18, found in Nitrobacter winogradskyi (strain ATCC 25391 / DSM 10237 / CIP 104748 / NCIMB 11846 / Nb-255).